Here is a 134-residue protein sequence, read N- to C-terminus: Lymphocyte antigen 6G (134 aa).

Positions 1–26 are cleaved as a signal peptide; sequence MDTCHIAKSCVLILLVVLLCAERAQG. The UPAR/Ly6 domain occupies 27–118; sequence LECYNCIGVP…PTGGSSWTMA (92 aa). Disulfide bonds link C29–C53, C32–C41, C46–C74, C78–C98, and C99–C104. N105 carries the GPI-anchor amidated asparagine lipid modification. Positions 106–134 are cleaved as a propeptide — removed in mature form; it reads AAVPTGGSSWTMAGVLLFSLVSVLLQTFL.

In terms of tissue distribution, expressed in bone marrow.

It localises to the cell membrane. This chain is Lymphocyte antigen 6G (Ly6g), found in Mus musculus (Mouse).